The sequence spans 499 residues: Probable cytosol aminopeptidase (499 aa).

Residues Lys263 and Asp268 each contribute to the Mn(2+) site. Lys275 is a catalytic residue. Residues Asp286, Asp345, and Glu347 each contribute to the Mn(2+) site. Residue Arg349 is part of the active site.

This sequence belongs to the peptidase M17 family. Requires Mn(2+) as cofactor.

The protein localises to the cytoplasm. The enzyme catalyses Release of an N-terminal amino acid, Xaa-|-Yaa-, in which Xaa is preferably Leu, but may be other amino acids including Pro although not Arg or Lys, and Yaa may be Pro. Amino acid amides and methyl esters are also readily hydrolyzed, but rates on arylamides are exceedingly low.. The catalysed reaction is Release of an N-terminal amino acid, preferentially leucine, but not glutamic or aspartic acids.. Presumably involved in the processing and regular turnover of intracellular proteins. Catalyzes the removal of unsubstituted N-terminal amino acids from various peptides. This Chlamydia trachomatis serovar D (strain ATCC VR-885 / DSM 19411 / UW-3/Cx) protein is Probable cytosol aminopeptidase (pepA).